Here is a 268-residue protein sequence, read N- to C-terminus: 3-deoxy-manno-octulosonate cytidylyltransferase (268 aa).

Belongs to the KdsB family.

It localises to the cytoplasm. The catalysed reaction is 3-deoxy-alpha-D-manno-oct-2-ulosonate + CTP = CMP-3-deoxy-beta-D-manno-octulosonate + diphosphate. It participates in nucleotide-sugar biosynthesis; CMP-3-deoxy-D-manno-octulosonate biosynthesis; CMP-3-deoxy-D-manno-octulosonate from 3-deoxy-D-manno-octulosonate and CTP: step 1/1. The protein operates within bacterial outer membrane biogenesis; lipopolysaccharide biosynthesis. Activates KDO (a required 8-carbon sugar) for incorporation into bacterial lipopolysaccharide in Gram-negative bacteria. This is 3-deoxy-manno-octulosonate cytidylyltransferase from Ralstonia nicotianae (strain ATCC BAA-1114 / GMI1000) (Ralstonia solanacearum).